Here is a 133-residue protein sequence, read N- to C-terminus: Small ribosomal subunit protein uS8c (133 aa).

The protein belongs to the universal ribosomal protein uS8 family. As to quaternary structure, part of the 30S ribosomal subunit.

The protein resides in the plastid. It localises to the chloroplast. One of the primary rRNA binding proteins, it binds directly to 16S rRNA central domain where it helps coordinate assembly of the platform of the 30S subunit. In Cyanidium caldarium (Red alga), this protein is Small ribosomal subunit protein uS8c (rps8).